A 167-amino-acid polypeptide reads, in one-letter code: RNA pyrophosphohydrolase (167 aa).

The Nudix hydrolase domain maps to 8–159 (PYRTCVGVML…KRPVYERVVK (152 aa)). The Nudix box signature appears at 47-68 (GGVDPGEDTWAAAKRELYEETS).

This sequence belongs to the Nudix hydrolase family. RppH subfamily. The cofactor is a divalent metal cation.

Functionally, accelerates the degradation of transcripts by removing pyrophosphate from the 5'-end of triphosphorylated RNA, leading to a more labile monophosphorylated state that can stimulate subsequent ribonuclease cleavage. The sequence is that of RNA pyrophosphohydrolase from Bradyrhizobium diazoefficiens (strain JCM 10833 / BCRC 13528 / IAM 13628 / NBRC 14792 / USDA 110).